A 202-amino-acid chain; its full sequence is Syndecan-4 (202 aa).

The signal sequence occupies residues 1–23 (MAPVCLFAPLLLLLLGGFPVAPG). The Extracellular segment spans residues 24–149 (ESIRETEVID…QGSNIFERTE (126 aa)). Disordered stretches follow at residues 42-76 (YFSGALPDDEDAGGLEQDSDFELSGSGDLDDTEEP) and 89-138 (LDNH…MSST). An O-linked (Xyl...) (glycosaminoglycan) serine glycan is attached at serine 44. A compositionally biased stretch (acidic residues) spans 48–62 (PDDEDAGGLEQDSDF). Serine 65 and serine 67 each carry an O-linked (Xyl...) (glycosaminoglycan) serine glycan. The span at 105–121 (SEPKELEENEVIPKRVP) shows a compositional bias: basic and acidic residues. The helical transmembrane segment at 150–174 (VLAALIVGGVVGILFAVFLILLLVY) threads the bilayer. Over 175–202 (RMKKKDEGSYDLGKKPIYKKAPTNEFYA) the chain is Cytoplasmic.

The protein belongs to the syndecan proteoglycan family. Homodimer. Interacts with CDCP1 and SDCBP. Interacts (via its cytoplasmic domain) with GIPC (via its PDZ domain). Interacts (via its cytoplasmic domain) with NUDT16L1. Interacts with DNM2; this interaction is markedly enhanced at focal ahesion site upon induction of focal adhesions and stress-fiber formation. In terms of processing, shedding is enhanced by a number of factors such as heparanase, thrombin or EGF. Also by stress and wound healing. PMA-mediated shedding is inhibited by TIMP3. Post-translationally, O-glycosylated; contains both chondroitin sulfate and heparan sulfate. Ser-44, Ser-65 and Ser-67 can all be modified by either chondroitin sulfate or heparan sulfate, and the protein exists in forms that contain only chondroitin sulfate, only heparan sulfate and both chondroitin sulfate and heparan sulfate.

The protein localises to the membrane. Its subcellular location is the secreted. Functionally, cell surface proteoglycan which regulates exosome biogenesis in concert with SDCBP and PDCD6IP. The polypeptide is Syndecan-4 (Rattus norvegicus (Rat)).